The chain runs to 110 residues: UPF0122 protein GK1195 (110 aa).

The protein belongs to the UPF0122 family.

Functionally, might take part in the signal recognition particle (SRP) pathway. This is inferred from the conservation of its genetic proximity to ftsY/ffh. May be a regulatory protein. This Geobacillus kaustophilus (strain HTA426) protein is UPF0122 protein GK1195.